Consider the following 171-residue polypeptide: Photosystem I assembly protein Ycf3 (171 aa).

TPR repeat units follow at residues 33 to 66 (AFSY…EEDP), 70 to 103 (SYIL…NSRL), and 118 to 151 (GTKS…APNN).

Belongs to the Ycf3 family.

It localises to the plastid. The protein localises to the chloroplast thylakoid membrane. In terms of biological role, essential for the assembly of the photosystem I (PSI) complex. May act as a chaperone-like factor to guide the assembly of the PSI subunits. This is Photosystem I assembly protein Ycf3 from Emiliania huxleyi (Coccolithophore).